Here is a 149-residue protein sequence, read N- to C-terminus: Large ribosomal subunit protein uL13 (149 aa).

Belongs to the universal ribosomal protein uL13 family. As to quaternary structure, part of the 50S ribosomal subunit.

This protein is one of the early assembly proteins of the 50S ribosomal subunit, although it is not seen to bind rRNA by itself. It is important during the early stages of 50S assembly. The chain is Large ribosomal subunit protein uL13 from Chlorobium limicola (strain DSM 245 / NBRC 103803 / 6330).